We begin with the raw amino-acid sequence, 691 residues long: DNA ligase (691 aa).

NAD(+) is bound by residues 41–45, 90–91, and Glu130; these read DAEYD and SL. The active-site N6-AMP-lysine intermediate is Lys132. Residues Arg153, Glu190, Lys307, and Lys331 each contribute to the NAD(+) site. Positions 425, 428, 443, and 449 each coordinate Zn(2+). The BRCT domain maps to 610 to 691; the sequence is APQGVLAGKT…MHTLLEGHAR (82 aa).

It belongs to the NAD-dependent DNA ligase family. LigA subfamily. The cofactor is Mg(2+). Requires Mn(2+) as cofactor.

The enzyme catalyses NAD(+) + (deoxyribonucleotide)n-3'-hydroxyl + 5'-phospho-(deoxyribonucleotide)m = (deoxyribonucleotide)n+m + AMP + beta-nicotinamide D-nucleotide.. Functionally, DNA ligase that catalyzes the formation of phosphodiester linkages between 5'-phosphoryl and 3'-hydroxyl groups in double-stranded DNA using NAD as a coenzyme and as the energy source for the reaction. It is essential for DNA replication and repair of damaged DNA. This is DNA ligase from Burkholderia pseudomallei (strain 1106a).